We begin with the raw amino-acid sequence, 105 residues long: Large ribosomal subunit protein uL24 (105 aa).

This sequence belongs to the universal ribosomal protein uL24 family. As to quaternary structure, part of the 50S ribosomal subunit.

One of two assembly initiator proteins, it binds directly to the 5'-end of the 23S rRNA, where it nucleates assembly of the 50S subunit. In terms of biological role, one of the proteins that surrounds the polypeptide exit tunnel on the outside of the subunit. The polypeptide is Large ribosomal subunit protein uL24 (Wolbachia sp. subsp. Brugia malayi (strain TRS)).